A 574-amino-acid polypeptide reads, in one-letter code: VAO-type flavoprotein oxidase VAO615 (574 aa).

Positions 1-17 (MPASLLRFLALAGTAVG) are cleaved as a signal peptide. 4 disulfide bridges follow: Cys-28/Cys-572, Cys-64/Cys-77, Cys-108/Cys-118, and Cys-450/Cys-476. Asn-47 carries N-linked (GlcNAc...) asparagine glycosylation. Asn-105 carries N-linked (GlcNAc...) asparagine glycosylation. Positions 120 to 299 (LGNYPSYVVN…LSMTARLHRD (180 aa)) constitute an FAD-binding PCMH-type domain. N-linked (GlcNAc...) asparagine glycans are attached at residues Asn-129, Asn-211, Asn-310, Asn-346, and Asn-438. The 6-(S-cysteinyl)-8alpha-(pros-histidyl)-FAD (His-Cys) cross-link spans 157-222 (HDYLGKSTGK…TGHRIVGGTC (66 aa)).

It belongs to the oxygen-dependent FAD-linked oxidoreductase family. It depends on FAD as a cofactor. In terms of processing, the FAD cofactor is bound via a bicovalent 6-S-cysteinyl, 8alpha-N1-histidyl FAD linkage.

The protein resides in the secreted. In terms of biological role, probably oxidoreductase that, when reduced, rapidly reacts with molecular oxygen, a hallmark of flavoprotein oxidases. A large panel of alcohols, including carbohydrates, steroids and secondary alcohols were tested as potential substrates, but none has been identified so far. In Thermothelomyces thermophilus (strain ATCC 42464 / BCRC 31852 / DSM 1799) (Sporotrichum thermophile), this protein is VAO-type flavoprotein oxidase VAO615.